The following is a 500-amino-acid chain: Lysine--tRNA ligase (500 aa).

Mg(2+)-binding residues include E410 and E417.

Belongs to the class-II aminoacyl-tRNA synthetase family. Homodimer. Mg(2+) serves as cofactor.

It is found in the cytoplasm. It catalyses the reaction tRNA(Lys) + L-lysine + ATP = L-lysyl-tRNA(Lys) + AMP + diphosphate. This chain is Lysine--tRNA ligase, found in Shewanella loihica (strain ATCC BAA-1088 / PV-4).